The primary structure comprises 256 residues: Undecaprenyl-diphosphatase (256 aa).

8 helical membrane passes run 1-21 (MTIL…FLPI), 39-59 (NAIN…AVIF), 70-90 (IDLW…GFIF), 97-117 (LFSL…FLIV), 134-154 (AISL…LIPG), 176-196 (AEFS…YDLL), 205-225 (ANLI…YLSI), and 235-255 (FTFF…LLFF).

This sequence belongs to the UppP family.

The protein resides in the cell inner membrane. The enzyme catalyses di-trans,octa-cis-undecaprenyl diphosphate + H2O = di-trans,octa-cis-undecaprenyl phosphate + phosphate + H(+). In terms of biological role, catalyzes the dephosphorylation of undecaprenyl diphosphate (UPP). Confers resistance to bacitracin. This Sulfurimonas denitrificans (strain ATCC 33889 / DSM 1251) (Thiomicrospira denitrificans (strain ATCC 33889 / DSM 1251)) protein is Undecaprenyl-diphosphatase.